Reading from the N-terminus, the 147-residue chain is Putative HTH-type transcriptional regulator slr0846 (147 aa).

Positions 2–130 constitute an HTH rrf2-type domain; sequence KLTTKSHYSV…YSITLADLYY (129 aa).

The chain is Putative HTH-type transcriptional regulator slr0846 from Synechocystis sp. (strain ATCC 27184 / PCC 6803 / Kazusa).